Consider the following 281-residue polypeptide: tRNA uridine(34) hydroxylase (281 aa).

One can recognise a Rhodanese domain in the interval 121 to 214; the sequence is SQPDVLVIDT…YLEKTHNKSG (94 aa). The active-site Cysteine persulfide intermediate is the Cys174.

It belongs to the TrhO family.

The enzyme catalyses uridine(34) in tRNA + AH2 + O2 = 5-hydroxyuridine(34) in tRNA + A + H2O. In terms of biological role, catalyzes oxygen-dependent 5-hydroxyuridine (ho5U) modification at position 34 in tRNAs. The chain is tRNA uridine(34) hydroxylase from Wolbachia pipientis subsp. Culex pipiens (strain wPip).